Consider the following 565-residue polypeptide: Wee1-like protein kinase 2 (565 aa).

Residues 217–493 (FLELERIGVG…TKHPILRPSL (277 aa)) form the Protein kinase domain. ATP contacts are provided by residues 223–231 (IGVGEFGSV) and K246. D344 serves as the catalytic Proton acceptor. Positions 349 and 383 each coordinate Mg(2+). Residues 496–522 (AVQLQKQLNVEKCKTAMLERELKAARL) adopt a coiled-coil conformation. The tract at residues 531–553 (PLGNANLQESETSPKKNNKRLVG) is disordered.

It belongs to the protein kinase superfamily. Ser/Thr protein kinase family. WEE1 subfamily.

Its subcellular location is the nucleus. The enzyme catalyses L-tyrosyl-[protein] + ATP = O-phospho-L-tyrosyl-[protein] + ADP + H(+). Its function is as follows. Oocyte-specific protein tyrosine kinase that phosphorylates and inhibits CDK1 and acts as a key regulator of meiosis. Required to maintain meiotic arrest in oocytes by phosphorylating CDK1 at 'Tyr-15', leading to inhibit CDK1 activity and prevent meiotic reentry. This chain is Wee1-like protein kinase 2 (WEE2), found in Gallus gallus (Chicken).